A 428-amino-acid polypeptide reads, in one-letter code: Elongation factor 1-alpha (428 aa).

Residues 5-215 enclose the tr-type G domain; the sequence is KPHVNIVFIG…ALDQIPEPPK (211 aa). The interval 14–21 is G1; sequence GHVDHGKS. 14 to 21 is a binding site for GTP; that stretch reads GHVDHGKS. S21 lines the Mg(2+) pocket. The G2 stretch occupies residues 68–72; sequence GITID. Residues 89–92 form a G3 region; sequence DAPG. Residues 89–93 and 144–147 contribute to the GTP site; these read DAPGH and NKMD. Residues 144–147 form a G4 region; it reads NKMD. Positions 181–183 are G5; sequence SAW.

This sequence belongs to the TRAFAC class translation factor GTPase superfamily. Classic translation factor GTPase family. EF-Tu/EF-1A subfamily.

Its subcellular location is the cytoplasm. It catalyses the reaction GTP + H2O = GDP + phosphate + H(+). Functionally, GTP hydrolase that promotes the GTP-dependent binding of aminoacyl-tRNA to the A-site of ribosomes during protein biosynthesis. This is Elongation factor 1-alpha from Thermococcus kodakarensis (strain ATCC BAA-918 / JCM 12380 / KOD1) (Pyrococcus kodakaraensis (strain KOD1)).